The primary structure comprises 197 residues: Chalcone--flavanone isomerase 2 (197 aa).

Substrate-binding residues include Thr-23, Asn-88, and Thr-165.

The protein belongs to the chalcone isomerase family.

The catalysed reaction is a chalcone = a flavanone.. The protein operates within secondary metabolite biosynthesis; flavonoid biosynthesis. In terms of biological role, catalyzes the intramolecular cyclization of bicyclic chalcones into tricyclic (S)-flavanones. Responsible for the isomerization of 4,2',4',6'-tetrahydroxychalcone (also termed chalcone) into naringenin. In Medicago sativa (Alfalfa), this protein is Chalcone--flavanone isomerase 2 (CHI2).